Here is a 99-residue protein sequence, read N- to C-terminus: SAGA-associated factor 11 (99 aa).

Residues I71 to C92 form an SGF11-type zinc finger.

It belongs to the SGF11 family. Component of the 1.8 MDa SAGA transcription coactivator-HAT complex. SAGA is built of 5 distinct domains with specialized functions. Within the SAGA complex, SUS1, SGF11, SGF73 and UBP8 form an additional subcomplex of SAGA called the DUB module (deubiquitination module). Interacts directly with SGF73, SUS1 and UBP8.

Its subcellular location is the nucleus. Its function is as follows. Functions as a component of the transcription regulatory histone acetylation (HAT) complex SAGA. At the promoters, SAGA is required for recruitment of the basal transcription machinery. It influences RNA polymerase II transcriptional activity through different activities such as TBP interaction and promoter selectivity, interaction with transcription activators, and chromatin modification through histone acetylation and deubiquitination. SAGA acetylates nucleosomal histone H3 to some extent (to form H3K9ac, H3K14ac, H3K18ac and H3K23ac). SAGA interacts with DNA via upstream activating sequences (UASs). Involved in transcriptional regulation of a subset of SAGA-regulated genes. Within the SAGA complex, participates in a subcomplex, that specifically deubiquitinates histones H2B. This chain is SAGA-associated factor 11, found in Saccharomyces cerevisiae (strain YJM789) (Baker's yeast).